A 470-amino-acid chain; its full sequence is Argininosuccinate lyase (470 aa).

This sequence belongs to the lyase 1 family. Argininosuccinate lyase subfamily.

The protein resides in the cytoplasm. It catalyses the reaction 2-(N(omega)-L-arginino)succinate = fumarate + L-arginine. It functions in the pathway amino-acid biosynthesis; L-arginine biosynthesis; L-arginine from L-ornithine and carbamoyl phosphate: step 3/3. This chain is Argininosuccinate lyase, found in Ehrlichia chaffeensis (strain ATCC CRL-10679 / Arkansas).